The primary structure comprises 411 residues: Protein DDI1 homolog 2 (411 aa).

The Ubiquitin-like domain maps to 1 to 81 (MLLTVFCAPR…LVLRQAERLR (81 aa)). Residues 82 to 144 (APPQPTVPGL…SGVSPQGLDN (63 aa)) form a disordered region. Low complexity predominate over residues 108–121 (QNRNRPQQAQRPST). Asp-262 is a catalytic residue. The Ubiquitin-binding signature appears at 387-406 (DEIADRELAEAIQRSVQDSG).

This sequence belongs to the DDI1 family. As to quaternary structure, homodimer.

Its subcellular location is the cytoplasm. It localises to the cytosol. The protein resides in the chromosome. Functionally, aspartic protease that mediates the cleavage of NFE2L1/NRF1 at 'Leu-104', thereby promoting release of NFE2L1/NRF1 from the endoplasmic reticulum membrane. Ubiquitination of NFE2L1/NRF1 is a prerequisite for cleavage, suggesting that DDI2 specifically recognizes and binds ubiquitinated NFE2L1/NRF1. Seems to act as a proteasomal shuttle which links the proteasome and replication fork proteins like RTF2. Required for cellular survival following replication stress. The polypeptide is Protein DDI1 homolog 2 (ddi2) (Danio rerio (Zebrafish)).